The chain runs to 355 residues: Protein RecA (355 aa).

67 to 74 (GPESSGKT) contacts ATP. The segment at 331–355 (NQDDKPDFTPAAHEVDEGSEAKENF) is disordered.

It belongs to the RecA family.

The protein resides in the cytoplasm. Functionally, can catalyze the hydrolysis of ATP in the presence of single-stranded DNA, the ATP-dependent uptake of single-stranded DNA by duplex DNA, and the ATP-dependent hybridization of homologous single-stranded DNAs. It interacts with LexA causing its activation and leading to its autocatalytic cleavage. This Erwinia tasmaniensis (strain DSM 17950 / CFBP 7177 / CIP 109463 / NCPPB 4357 / Et1/99) protein is Protein RecA.